Here is an 89-residue protein sequence, read N- to C-terminus: Acylphosphatase (89 aa).

The 86-residue stretch at 4 to 89 folds into the Acylphosphatase-like domain; sequence SRRFLVSGTV…EQPPEGFRVL (86 aa). Residues Arg19 and Asn37 contribute to the active site.

It belongs to the acylphosphatase family.

The enzyme catalyses an acyl phosphate + H2O = a carboxylate + phosphate + H(+). The protein is Acylphosphatase (acyP) of Alkalilimnicola ehrlichii (strain ATCC BAA-1101 / DSM 17681 / MLHE-1).